Reading from the N-terminus, the 173-residue chain is Putative metal-dependent hydrolase BCE33L2441 (173 aa).

Residues H65, H156, and H160 each coordinate Zn(2+).

The protein belongs to the metal hydrolase YfiT family. As to quaternary structure, homodimer. It depends on Zn(2+) as a cofactor.

The protein resides in the cytoplasm. Possible metal-dependent hydrolase. In Bacillus cereus (strain ZK / E33L), this protein is Putative metal-dependent hydrolase BCE33L2441.